The following is a 410-amino-acid chain: Multifunctional CCA protein (410 aa).

Residues G8 and R11 each coordinate ATP. Residues G8 and R11 each coordinate CTP. Positions 21 and 23 each coordinate Mg(2+). R91, R137, and R140 together coordinate ATP. CTP contacts are provided by R91, R137, and R140. The HD domain maps to 225 to 326 (SGIHTLMTLQ…LNVLKKTDAF (102 aa)).

It belongs to the tRNA nucleotidyltransferase/poly(A) polymerase family. Bacterial CCA-adding enzyme type 1 subfamily. Monomer. Can also form homodimers and oligomers. The cofactor is Mg(2+). It depends on Ni(2+) as a cofactor.

It catalyses the reaction a tRNA precursor + 2 CTP + ATP = a tRNA with a 3' CCA end + 3 diphosphate. The enzyme catalyses a tRNA with a 3' CCA end + 2 CTP + ATP = a tRNA with a 3' CCACCA end + 3 diphosphate. Functionally, catalyzes the addition and repair of the essential 3'-terminal CCA sequence in tRNAs without using a nucleic acid template. Adds these three nucleotides in the order of C, C, and A to the tRNA nucleotide-73, using CTP and ATP as substrates and producing inorganic pyrophosphate. tRNA 3'-terminal CCA addition is required both for tRNA processing and repair. Also involved in tRNA surveillance by mediating tandem CCA addition to generate a CCACCA at the 3' terminus of unstable tRNAs. While stable tRNAs receive only 3'-terminal CCA, unstable tRNAs are marked with CCACCA and rapidly degraded. In Neisseria gonorrhoeae (strain ATCC 700825 / FA 1090), this protein is Multifunctional CCA protein.